Here is a 215-residue protein sequence, read N- to C-terminus: Cytochrome b6 (215 aa).

The chain crosses the membrane as a helical span at residues 32–52 (IFYCLGGITFTCFLLQVASGF). C35 lines the heme c pocket. The heme b site is built by H86 and H100. The next 3 membrane-spanning stretches (helical) occupy residues 90-110 (ASMM…TGGF), 116-136 (LTWV…VTGY), and 186-206 (LHTF…FLMI). H187 and H202 together coordinate heme b.

The protein belongs to the cytochrome b family. PetB subfamily. The 4 large subunits of the cytochrome b6-f complex are cytochrome b6, subunit IV (17 kDa polypeptide, PetD), cytochrome f and the Rieske protein, while the 4 small subunits are PetG, PetL, PetM and PetN. The complex functions as a dimer. Heme b serves as cofactor. It depends on heme c as a cofactor.

Its subcellular location is the plastid. It is found in the chloroplast thylakoid membrane. Functionally, component of the cytochrome b6-f complex, which mediates electron transfer between photosystem II (PSII) and photosystem I (PSI), cyclic electron flow around PSI, and state transitions. The polypeptide is Cytochrome b6 (Coleochaete orbicularis (Charophycean green alga)).